The sequence spans 114 residues: UPF0145 protein PYRAB04900 (114 aa).

This sequence belongs to the UPF0145 family.

In Pyrococcus abyssi (strain GE5 / Orsay), this protein is UPF0145 protein PYRAB04900.